Consider the following 411-residue polypeptide: LL-diaminopimelate aminotransferase (411 aa).

Substrate-binding residues include Tyr-15 and Gly-42. Pyridoxal 5'-phosphate contacts are provided by residues Tyr-72, 108 to 109 (AK), Tyr-132, Asn-187, Tyr-218, and 246 to 248 (SFS). Substrate contacts are provided by Lys-109, Tyr-132, and Asn-187. Lys-249 carries the N6-(pyridoxal phosphate)lysine modification. Pyridoxal 5'-phosphate contacts are provided by Arg-257 and Asn-292. Positions 292 and 388 each coordinate substrate.

This sequence belongs to the class-I pyridoxal-phosphate-dependent aminotransferase family. LL-diaminopimelate aminotransferase subfamily. In terms of assembly, homodimer. Pyridoxal 5'-phosphate is required as a cofactor.

It carries out the reaction (2S,6S)-2,6-diaminopimelate + 2-oxoglutarate = (S)-2,3,4,5-tetrahydrodipicolinate + L-glutamate + H2O + H(+). It functions in the pathway amino-acid biosynthesis; L-lysine biosynthesis via DAP pathway; LL-2,6-diaminopimelate from (S)-tetrahydrodipicolinate (aminotransferase route): step 1/1. Functionally, involved in the synthesis of meso-diaminopimelate (m-DAP or DL-DAP), required for both lysine and peptidoglycan biosynthesis. Catalyzes the direct conversion of tetrahydrodipicolinate to LL-diaminopimelate. This chain is LL-diaminopimelate aminotransferase, found in Crocosphaera subtropica (strain ATCC 51142 / BH68) (Cyanothece sp. (strain ATCC 51142)).